The chain runs to 635 residues: Extracellular metalloproteinase mep (635 aa).

Positions 1–19 (MMRGLLLAGALGLPLAVLA) are cleaved as a signal peptide. Residues 20-246 (HPTHHAHGLQ…VHGVVDYVAE (227 aa)) constitute a propeptide that is removed on maturation. N-linked (GlcNAc...) asparagine glycosylation is present at Asn287. Residues 290 to 309 (TTRGNNGIAQSNPTGGSQYL) are compositionally biased toward polar residues. Residues 290-311 (TTRGNNGIAQSNPTGGSQYLKN) are disordered. A Zn(2+)-binding site is contributed by His430. Glu431 is a catalytic residue. A Zn(2+)-binding site is contributed by His434.

This sequence belongs to the peptidase M36 family. It depends on Zn(2+) as a cofactor.

It is found in the secreted. In terms of biological role, secreted metalloproteinase that allows assimilation of proteinaceous substrates. In Aspergillus flavus (strain ATCC 200026 / FGSC A1120 / IAM 13836 / NRRL 3357 / JCM 12722 / SRRC 167), this protein is Extracellular metalloproteinase mep (mep).